Here is a 607-residue protein sequence, read N- to C-terminus: Major facilitator superfamily multidrug transporter mdrA (607 aa).

A run of 12 helical transmembrane segments spans residues 77 to 97 (MTVAVSTLAVALVSSAYTGGV), 110 to 130 (VATLGVSLFVLGFAIGPLLWA), 139 to 159 (QIIFTVTYCALTAFNAGSAGA), 170 to 190 (FFAGAFGASPLTNAGGVIADM), 202 to 222 (LFAAAPFLGPVLGPIIGGFLG), 229 to 249 (WVMGFLGAFSGAVWIICTIFV), 305 to 325 (PIVFLLSLYMAIIYGTLYMLF), 342 to 362 (VSSLPFLGIMVGMMFAVTYSV), 385 to 405 (LPPTLIASVAIPIGLFWFAWT), 413 to 433 (IVCILAGAPFGFGMVLVFLGI), 443 to 463 (IFAASVLAANSVLRSIFGAVF), and 478 to 498 (WASSIPAFLALACVPFPFLFY). The segment at 523 to 583 (EQMKQAPEPE…ASTRTASSLR (61 aa)) is disordered. Over residues 553–564 (DVSETESNVEEL) the composition is skewed to acidic residues. The span at 572–583 (SRASTRTASSLR) shows a compositional bias: low complexity.

This sequence belongs to the major facilitator superfamily. DHA1 family. Polyamines/proton antiporter (TC 2.A.1.2.16) subfamily.

It localises to the cell membrane. Functionally, MFS transporter involved in the basal level of azole susceptibility. Confers resistance to voriconazole and, to a lesser extent, to fluconazole. The chain is Major facilitator superfamily multidrug transporter mdrA from Aspergillus fumigatus (strain ATCC MYA-4609 / CBS 101355 / FGSC A1100 / Af293) (Neosartorya fumigata).